Consider the following 105-residue polypeptide: uncharacterized protein (105 aa).

Residues 47–105 form a disordered region; it reads ENASAPRIQPSVTPSPAAPPSTDQLMMEKMMGSAGLNKYRKQEKEKQEEDGNGESLFDF. The span at 86–95 shows a compositional bias: basic and acidic residues; that stretch reads RKQEKEKQEE.

This is an uncharacterized protein from Bacillus subtilis (strain 168).